A 173-amino-acid chain; its full sequence is Peptide methionine sulfoxide reductase MsrA (173 aa).

The active site involves cysteine 10.

The protein belongs to the MsrA Met sulfoxide reductase family.

The catalysed reaction is L-methionyl-[protein] + [thioredoxin]-disulfide + H2O = L-methionyl-(S)-S-oxide-[protein] + [thioredoxin]-dithiol. The enzyme catalyses [thioredoxin]-disulfide + L-methionine + H2O = L-methionine (S)-S-oxide + [thioredoxin]-dithiol. In terms of biological role, has an important function as a repair enzyme for proteins that have been inactivated by oxidation. Catalyzes the reversible oxidation-reduction of methionine sulfoxide in proteins to methionine. The sequence is that of Peptide methionine sulfoxide reductase MsrA from Nautilia profundicola (strain ATCC BAA-1463 / DSM 18972 / AmH).